The primary structure comprises 326 residues: MQPPVPGPLGLLDPAEGLSRRKKTSLWFVGSLLLVSVLIVTVGLAATTRTENVTVGGYYPGIILGFGSFLGIIGINLVENRRQMLVAAIVFISFGVVAAFCCAIVDGVFAAQHIEPRPLTTGRCQFYSSGVGYLYDVYQTEVTCHSLDGKCQLKVRSNTCYCCDLYACGSAEPSPAYYEFIGVSGCQDVLHLYRLLWASAVLNVLGLFLGIITAAVLGAFKDMVPLSQLAYGPAVPPQTLYNPAQQILAYAGFRLTPEPVPTCSSYPLPLQPCSRFPVAPSSALASSEDLQPPSPSSSGSGLPGQAPPCYAPTYFPPGEKPPPYAP.

Helical transmembrane passes span leucine 26–alanine 46, valine 55–isoleucine 75, leucine 85–valine 105, and alanine 200–phenylalanine 220. Residues leucine 284–proline 326 form a disordered region. The segment covering glutamine 305 to proline 326 has biased composition (pro residues).

It belongs to the TMEM255 family.

It is found in the membrane. The chain is Transmembrane protein 255B (TMEM255B) from Homo sapiens (Human).